The following is a 327-amino-acid chain: AA9 family lytic polysaccharide monooxygenase G (327 aa).

The N-terminal stretch at 1 to 20 is a signal peptide; it reads MKLNLASLCFLASIAPLVSG. Residues His-21 and His-96 each coordinate Cu(2+). An intrachain disulfide couples Cys-62 to Cys-185. Residue His-172 coordinates O2. Cu(2+) is bound at residue Tyr-182. The N-linked (GlcNAc...) asparagine glycan is linked to Asn-290. The CBM1 domain occupies 291–327; the sequence is GTIKKYYQCGGQGWTGSGSCEAGTSCREWNTWYFQCV.

This sequence belongs to the polysaccharide monooxygenase AA9 family. Cu(2+) is required as a cofactor.

Its subcellular location is the secreted. The enzyme catalyses [(1-&gt;4)-beta-D-glucosyl]n+m + reduced acceptor + O2 = 4-dehydro-beta-D-glucosyl-[(1-&gt;4)-beta-D-glucosyl]n-1 + [(1-&gt;4)-beta-D-glucosyl]m + acceptor + H2O.. Functionally, lytic polysaccharide monooxygenase (LPMO) that depolymerizes crystalline and amorphous polysaccharides via the oxidation of scissile alpha- or beta-(1-4)-glycosidic bonds, yielding C1 or C4 oxidation products. Catalysis by LPMOs requires the reduction of the active-site copper from Cu(II) to Cu(I) by a reducing agent and H(2)O(2) or O(2) as a cosubstrate. This chain is AA9 family lytic polysaccharide monooxygenase G, found in Aspergillus tamarii.